We begin with the raw amino-acid sequence, 495 residues long: Cytochrome P450 2B15 (495 aa).

Phosphoserine; by PKA is present on S129. C437 provides a ligand contact to heme.

The protein belongs to the cytochrome P450 family. Heme serves as cofactor.

Its subcellular location is the endoplasmic reticulum membrane. The protein resides in the microsome membrane. It carries out the reaction an organic molecule + reduced [NADPH--hemoprotein reductase] + O2 = an alcohol + oxidized [NADPH--hemoprotein reductase] + H2O + H(+). In terms of biological role, cytochromes P450 are a group of heme-thiolate monooxygenases. In liver microsomes, this enzyme is involved in an NADPH-dependent electron transport pathway. It oxidizes a variety of structurally unrelated compounds, including steroids, fatty acids, and xenobiotics. The protein is Cytochrome P450 2B15 (Cyp2b15) of Rattus norvegicus (Rat).